We begin with the raw amino-acid sequence, 74 residues long: Translational regulator CsrA (74 aa).

The protein belongs to the CsrA/RsmA family. As to quaternary structure, homodimer; the beta-strands of each monomer intercalate to form a hydrophobic core, while the alpha-helices form wings that extend away from the core.

The protein resides in the cytoplasm. In terms of biological role, a translational regulator that binds mRNA to regulate translation initiation and/or mRNA stability. Usually binds in the 5'-UTR at or near the Shine-Dalgarno sequence preventing ribosome-binding, thus repressing translation. Its main target seems to be the major flagellin gene, while its function is anatagonized by FliW. This is Translational regulator CsrA from Oceanobacillus iheyensis (strain DSM 14371 / CIP 107618 / JCM 11309 / KCTC 3954 / HTE831).